A 188-amino-acid chain; its full sequence is GPI-anchored hemophore ARB_01017 (188 aa).

Residues 1–17 (MKLSVVALAALVSVAAA) form the signal peptide. Residues 18–107 (QGVSELPKCA…SSSSGSASST (90 aa)) enclose the CFEM domain. Intrachain disulfides connect Cys26–Cys64, Cys30–Cys59, Cys39–Cys45, and Cys47–Cys80. Asp42 serves as a coordination point for heme. A disordered region spans residues 95–163 (TGGSSSSGSA…ATSTGAPTQT (69 aa)). Asn165 is lipidated: GPI-anchor amidated asparagine. Positions 166–188 (AAASVNANGGLLAAIAALVIAVA) are cleaved as a propeptide — removed in mature form.

Belongs to the RBT5 family. In terms of processing, the GPI-anchor is attached to the protein in the endoplasmic reticulum and serves to target the protein to the cell surface. There, the glucosamine-inositol phospholipid moiety is cleaved off and the GPI-modified mannoprotein is covalently attached via its lipidless GPI glycan remnant to the 1,6-beta-glucan of the outer cell wall layer.

The protein resides in the secreted. It is found in the cell wall. Its subcellular location is the cell membrane. Its function is as follows. GPI-anchored cell wall protein involved in stabilizing the cell wall. The sequence is that of GPI-anchored hemophore ARB_01017 from Arthroderma benhamiae (strain ATCC MYA-4681 / CBS 112371) (Trichophyton mentagrophytes).